Here is a 345-residue protein sequence, read N- to C-terminus: Nuclear hormone receptor family nhr-176 (345 aa).

The nuclear receptor DNA-binding region spans 7–82 (IQPCLVCGQS…AGMLEKMVFS (76 aa)). The NR C4-type zinc-finger motif lies at 10 to 30 (CLVCGQSSNSILFGAPSCRAC). The NR C4-type; degenerate zinc-finger motif lies at 46 to 65 (NNCLGECSFAKKSMKPCQSC). In terms of domain architecture, NR LBD spans 92–342 (FEKSILEELE…CPLYAISTNS (251 aa)). Positions 331–342 (SGCPLYAISTNS) are AF-2.

It is found in the nucleus. In terms of biological role, nuclear hormone receptor. Binds to xenobiotic ligand thiabendazole (TBZ), in vitro. Involved in the up-regulation of phase I detoxification genes, such as probable cytochrome P450 cyp-35d1, in response to TBZ. In Caenorhabditis elegans, this protein is Nuclear hormone receptor family nhr-176.